The primary structure comprises 84 residues: MSNKGQLLQEPFLNTLRREHVPVSIYLVNGIKLQGQIESFDQYVVLLRNTVTQMVFKHAISTIVPGRAVHFSTAEPADANSNNG.

Residues 10-69 (EPFLNTLRREHVPVSIYLVNGIKLQGQIESFDQYVVLLRNTVTQMVFKHAISTIVPGRAV) form the Sm domain.

Belongs to the Hfq family. In terms of assembly, homohexamer.

In terms of biological role, RNA chaperone that binds small regulatory RNA (sRNAs) and mRNAs to facilitate mRNA translational regulation in response to envelope stress, environmental stress and changes in metabolite concentrations. Also binds with high specificity to tRNAs. This Verminephrobacter eiseniae (strain EF01-2) protein is RNA-binding protein Hfq.